An 875-amino-acid chain; its full sequence is Valine--tRNA ligase (875 aa).

The 'HIGH' region signature appears at 41-51 (PNVTGSLHMGH). The short motif at 525–529 (KMSKS) is the 'KMSKS' region element. Lysine 528 contacts ATP. Residues 810–875 (VDLELIKKNL…ERISITIKGL (66 aa)) are a coiled coil.

Belongs to the class-I aminoacyl-tRNA synthetase family. ValS type 1 subfamily. As to quaternary structure, monomer.

It localises to the cytoplasm. It carries out the reaction tRNA(Val) + L-valine + ATP = L-valyl-tRNA(Val) + AMP + diphosphate. In terms of biological role, catalyzes the attachment of valine to tRNA(Val). As ValRS can inadvertently accommodate and process structurally similar amino acids such as threonine, to avoid such errors, it has a 'posttransfer' editing activity that hydrolyzes mischarged Thr-tRNA(Val) in a tRNA-dependent manner. The chain is Valine--tRNA ligase from Pelagibacter ubique (strain HTCC1062).